The following is a 456-amino-acid chain: Shufflon protein D' (456 aa).

The segment at 1 to 361 (MKKYDRGWAS…TGAILSCQSG (361 aa)) is constant region. A variable region region spans residues 362–456 (TWRKSNSGST…KCSYVVACQN (95 aa)).

This chain is Shufflon protein D', found in Escherichia coli.